A 172-amino-acid polypeptide reads, in one-letter code: Peptide methionine sulfoxide reductase MsrA 2 (172 aa).

The active site involves cysteine 12.

This sequence belongs to the MsrA Met sulfoxide reductase family.

It carries out the reaction L-methionyl-[protein] + [thioredoxin]-disulfide + H2O = L-methionyl-(S)-S-oxide-[protein] + [thioredoxin]-dithiol. The enzyme catalyses [thioredoxin]-disulfide + L-methionine + H2O = L-methionine (S)-S-oxide + [thioredoxin]-dithiol. Has an important function as a repair enzyme for proteins that have been inactivated by oxidation. Catalyzes the reversible oxidation-reduction of methionine sulfoxide in proteins to methionine. The polypeptide is Peptide methionine sulfoxide reductase MsrA 2 (msrA2) (Lactococcus lactis subsp. lactis (strain IL1403) (Streptococcus lactis)).